Here is a 223-residue protein sequence, read N- to C-terminus: MIF4G domain-containing protein B (223 aa).

Residues 9–206 (DYKIQGFDAD…LEMIEYRAAG (198 aa)) enclose the MIF4G domain.

The protein belongs to the MIF4GD family. In terms of assembly, interacts with eif4g1, eif4g2 and slbp; probably tethered by SLBP to the 3'-end of mRNAs ending with the histone stem-loop, it also interacts with eif4g1 which is bound to their 5'-end.

The protein localises to the cytoplasm. It localises to the nucleus. Functions in replication-dependent translation of histone mRNAs which differ from other eukaryotic mRNAs in that they do not end with a poly-A tail but a stem-loop. May participate in circularizing those mRNAs specifically enhancing their translation. This chain is MIF4G domain-containing protein B (mif4gd-b), found in Xenopus laevis (African clawed frog).